Reading from the N-terminus, the 360-residue chain is Photosystem II protein D1 (360 aa).

A run of 3 helical transmembrane segments spans residues 29 to 46 (YIGW…TATS), 118 to 133 (HFLL…EWEL), and 142 to 156 (WIFV…AASA). His-118 lines the chlorophyll a pocket. Pheophytin a is bound at residue Tyr-126. Asp-170 and Glu-189 together coordinate [CaMn4O5] cluster. A helical transmembrane segment spans residues 197-218 (FHMAGVAGVFGGSLFSAMHGSL). Position 198 (His-198) interacts with chlorophyll a. A quinone-binding positions include His-215 and 264–265 (SF). His-215 contributes to the Fe cation binding site. His-272 is a binding site for Fe cation. Residues 274-288 (FLALWPVLGIWLTAM) form a helical membrane-spanning segment. 4 residues coordinate [CaMn4O5] cluster: His-332, Glu-333, Asp-342, and Ala-344. The propeptide occupies 345–360 (SGDVLPVAFTAPAVNA).

This sequence belongs to the reaction center PufL/M/PsbA/D family. In terms of assembly, PSII is composed of 1 copy each of membrane proteins PsbA, PsbB, PsbC, PsbD, PsbE, PsbF, PsbH, PsbI, PsbJ, PsbK, PsbL, PsbM, PsbT, PsbX, PsbY, PsbZ, Psb30/Ycf12, at least 3 peripheral proteins of the oxygen-evolving complex and a large number of cofactors. It forms dimeric complexes. The cofactor is The D1/D2 heterodimer binds P680, chlorophylls that are the primary electron donor of PSII, and subsequent electron acceptors. It shares a non-heme iron and each subunit binds pheophytin, quinone, additional chlorophylls, carotenoids and lipids. D1 provides most of the ligands for the Mn4-Ca-O5 cluster of the oxygen-evolving complex (OEC). There is also a Cl(-1) ion associated with D1 and D2, which is required for oxygen evolution. The PSII complex binds additional chlorophylls, carotenoids and specific lipids.. Post-translationally, tyr-161 forms a radical intermediate that is referred to as redox-active TyrZ, YZ or Y-Z. C-terminally processed by CTPA; processing is essential to allow assembly of the oxygen-evolving complex and thus photosynthetic growth.

The protein localises to the plastid. It is found in the chloroplast thylakoid membrane. The enzyme catalyses 2 a plastoquinone + 4 hnu + 2 H2O = 2 a plastoquinol + O2. Photosystem II (PSII) is a light-driven water:plastoquinone oxidoreductase that uses light energy to abstract electrons from H(2)O, generating O(2) and a proton gradient subsequently used for ATP formation. It consists of a core antenna complex that captures photons, and an electron transfer chain that converts photonic excitation into a charge separation. The D1/D2 (PsbA/PsbD) reaction center heterodimer binds P680, the primary electron donor of PSII as well as several subsequent electron acceptors. The chain is Photosystem II protein D1 from Thalassiosira pseudonana (Marine diatom).